Consider the following 349-residue polypeptide: Anthranilate phosphoribosyltransferase (349 aa).

Residues glycine 82, 85 to 86, 92 to 95, 110 to 118, and serine 122 contribute to the 5-phospho-alpha-D-ribose 1-diphosphate site; these read GD, NVST, and KHGNRAVSG. Glycine 82 lines the anthranilate pocket. Serine 94 is a Mg(2+) binding site. Asparagine 113 provides a ligand contact to anthranilate. Arginine 168 provides a ligand contact to anthranilate. The Mg(2+) site is built by aspartate 227 and glutamate 228.

The protein belongs to the anthranilate phosphoribosyltransferase family. Homodimer. Requires Mg(2+) as cofactor.

The enzyme catalyses N-(5-phospho-beta-D-ribosyl)anthranilate + diphosphate = 5-phospho-alpha-D-ribose 1-diphosphate + anthranilate. It participates in amino-acid biosynthesis; L-tryptophan biosynthesis; L-tryptophan from chorismate: step 2/5. Functionally, catalyzes the transfer of the phosphoribosyl group of 5-phosphorylribose-1-pyrophosphate (PRPP) to anthranilate to yield N-(5'-phosphoribosyl)-anthranilate (PRA). The protein is Anthranilate phosphoribosyltransferase of Pseudomonas fluorescens (strain Pf0-1).